A 216-amino-acid polypeptide reads, in one-letter code: uncharacterized protein (216 aa).

The S-adenosyl-L-methionine site is built by Gly56 and Glu77.

The protein belongs to the methyltransferase superfamily. YrrT family.

Could be a S-adenosyl-L-methionine-dependent methyltransferase. This is an uncharacterized protein from Alkaliphilus oremlandii (strain OhILAs) (Clostridium oremlandii (strain OhILAs)).